The primary structure comprises 132 residues: Bombinin-like peptides (132 aa).

An N-terminal signal peptide occupies residues 1 to 18 (MNFKYIIAVSFLIASAYA). A propeptide spanning residues 19–42 (RSEEYDIQSLSQRDVLEEESLRKI) is cleaved from the precursor. A Phenylalanine amide modification is found at F68. A propeptide spanning residues 72–112 (TAEDHEVMKRLEAAMRDLDSLDYPEEASERETRGFNQEEKE) is cleaved from the precursor. A Leucine amide modification is found at L131.

It belongs to the bombinin family. Expressed by the skin glands.

It is found in the secreted. In terms of biological role, has antimicrobial activity against Gram-negative bacterium E.coli (MIC=26.3 uM), Gram-positive bacterium S.aureus (MIC=26.3 uM) and yeast C.albicans (MIC=52.5 uM). Has moderate hemolytic activity towards human erythrocytes at a concentration of 52.2 uM. Has no antimicrobial activity at concentrations up to 161 uM. Has moderate hemolytic activity towards human erythrocytes at a concentration of 40.3 uM. In Bombina orientalis (Oriental fire-bellied toad), this protein is Bombinin-like peptides.